The primary structure comprises 457 residues: Argininosuccinate lyase (457 aa).

Belongs to the lyase 1 family. Argininosuccinate lyase subfamily.

It localises to the cytoplasm. The catalysed reaction is 2-(N(omega)-L-arginino)succinate = fumarate + L-arginine. Its pathway is amino-acid biosynthesis; L-arginine biosynthesis; L-arginine from L-ornithine and carbamoyl phosphate: step 3/3. The polypeptide is Argininosuccinate lyase (Pectobacterium carotovorum subsp. carotovorum (strain PC1)).